A 278-amino-acid chain; its full sequence is Short-chain dehydrogenase/reductase eupG (278 aa).

The NADP(+) site is built by L19, D71, and N98. Residue S155 is the Proton donor of the active site. Y188, K192, and T223 together coordinate NADP(+). Y188 acts as the Proton acceptor in catalysis. K192 functions as the Lowers pKa of active site Tyr in the catalytic mechanism.

This sequence belongs to the short-chain dehydrogenases/reductases (SDR) family.

It functions in the pathway secondary metabolite biosynthesis; terpenoid biosynthesis. Its function is as follows. Short-chain dehydrogenase/reductase; part of the gene cluster that mediates the biosynthesis of eupenifeldin, a bistropolone meroterpenoid that acts as an antitumor agent. The first step of eupenifeldin biosynthesis is the biosynthesis of 3-methylorcinaldehyde performed by the non-reducing polyketide synthase eupA. Oxidative dearomatization of 3-methylorcinaldehyde likely catalyzed by the FAD-dependent monooxygenase eupB is followed by oxidative ring expansion by the 2-oxoglutarate-dependent dioxygenase eupC to provide the first tropolone metabolite, tropolone stipitaldehyde. In parallel, generation of sesquiterpene alpha-humulene from farnesylpyrophosphate (FPP) is catalyzed by the terpene cyclase eupE. The cytochrome P450 monooxygenase eupD then hydroxylates humulene to humulenol. The putative Diels-Alderase eupF probably catalyzes the formation of the tropolone-humulene skeleton by linking humulenol and the polyketide moiety. The short-chain dehydrogenase/reductase eupG and the flavin-dependent monooxygenase eupH are also essential for eupenifeldin biosynthesis and are likely the additional decorating enzymes of the tropolone-humulene skeleton to produce final eupenifeldin or derivatives. The polypeptide is Short-chain dehydrogenase/reductase eupG (Phoma sp).